The primary structure comprises 221 residues: Ribosomal RNA small subunit methyltransferase G (221 aa).

Residues Gly-85, Leu-90, 138 to 139, and Arg-151 each bind S-adenosyl-L-methionine; that span reads AE.

The protein belongs to the methyltransferase superfamily. RNA methyltransferase RsmG family.

It is found in the cytoplasm. The enzyme catalyses guanosine(527) in 16S rRNA + S-adenosyl-L-methionine = N(7)-methylguanosine(527) in 16S rRNA + S-adenosyl-L-homocysteine. Its function is as follows. Specifically methylates the N7 position of guanine in position 527 of 16S rRNA. This is Ribosomal RNA small subunit methyltransferase G from Caulobacter sp. (strain K31).